Here is a 534-residue protein sequence, read N- to C-terminus: CTP synthase (534 aa).

The segment at 1-267 is amidoligase domain; that stretch reads MTKYIFVTGG…DQIVCDHLKL (267 aa). Ser-13 serves as a coordination point for CTP. Ser-13 lines the UTP pocket. 14 to 19 serves as a coordination point for ATP; that stretch reads SIGKGI. Residue Tyr-54 participates in L-glutamine binding. Residue Asp-71 participates in ATP binding. The Mg(2+) site is built by Asp-71 and Glu-141. Residues 148 to 150, 188 to 193, and Lys-224 each bind CTP; these read DIE and KTKPTQ. UTP contacts are provided by residues 188–193 and Lys-224; that span reads KTKPTQ. Positions 292-534 constitute a Glutamine amidotransferase type-1 domain; that stretch reads KIALVGKYVE…FVTAAVENMK (243 aa). L-glutamine is bound at residue Gly-354. Cys-381 serves as the catalytic Nucleophile; for glutamine hydrolysis. L-glutamine-binding positions include 382–385, Glu-405, and Arg-463; that span reads LGMQ. Catalysis depends on residues His-508 and Glu-510.

The protein belongs to the CTP synthase family. Homotetramer.

The enzyme catalyses UTP + L-glutamine + ATP + H2O = CTP + L-glutamate + ADP + phosphate + 2 H(+). It carries out the reaction L-glutamine + H2O = L-glutamate + NH4(+). It catalyses the reaction UTP + NH4(+) + ATP = CTP + ADP + phosphate + 2 H(+). It participates in pyrimidine metabolism; CTP biosynthesis via de novo pathway; CTP from UDP: step 2/2. Allosterically activated by GTP, when glutamine is the substrate; GTP has no effect on the reaction when ammonia is the substrate. The allosteric effector GTP functions by stabilizing the protein conformation that binds the tetrahedral intermediate(s) formed during glutamine hydrolysis. Inhibited by the product CTP, via allosteric rather than competitive inhibition. Its function is as follows. Catalyzes the ATP-dependent amination of UTP to CTP with either L-glutamine or ammonia as the source of nitrogen. Regulates intracellular CTP levels through interactions with the four ribonucleotide triphosphates. This chain is CTP synthase, found in Streptococcus agalactiae serotype V (strain ATCC BAA-611 / 2603 V/R).